We begin with the raw amino-acid sequence, 75 residues long: Carwaprin-b (75 aa).

A signal peptide spans methionine 1 to serine 24. The region spanning arginine 27–isoleucine 72 is the WAP domain. Intrachain disulfides connect cysteine 34–cysteine 60, cysteine 43–cysteine 64, cysteine 47–cysteine 59, and cysteine 53–cysteine 68.

This sequence belongs to the venom waprin family. Expressed by the venom gland.

It localises to the secreted. Its function is as follows. Damages membranes of susceptible bacteria. Has no hemolytic activity. Not toxic to mice. Does not inhibit the proteinases elastase and cathepsin G. The chain is Carwaprin-b from Tropidechis carinatus (Australian rough-scaled snake).